Reading from the N-terminus, the 504-residue chain is Anaerobic nitric oxide reductase transcription regulator NorR (504 aa).

Asp-57 is subject to 4-aspartylphosphate. Residues 187-416 form the Sigma-54 factor interaction domain; that stretch reads MIGLSPGMTQ…LEHAIHRAVV (230 aa). ATP contacts are provided by residues 215–222 and 278–287; these read GETGTGKE and ADNGTLFLDE. A DNA-binding region (H-T-H motif) is located at residues 479–498; it reads WAACARMLETDVANLHRLAK.

It functions in the pathway nitrogen metabolism; nitric oxide reduction. Its function is as follows. Required for the expression of anaerobic nitric oxide (NO) reductase, acts as a transcriptional activator for at least the norVW operon. Activation also requires sigma-54. The protein is Anaerobic nitric oxide reductase transcription regulator NorR of Escherichia coli O8 (strain IAI1).